We begin with the raw amino-acid sequence, 125 residues long: Mitochondrial import inner membrane translocase subunit tim16-A (125 aa).

Residues 58–110 (EAQQILNVSKLTPEEIQKNYEHLFKVNDKGLGGSFYLQSKVVRAKERLDQEME) form a J-like region.

This sequence belongs to the TIM16/PAM16 family. In terms of assembly, probable component of the PAM complex at least composed of 1 mitochondrial HSP70 protein, 1 GRPE, 1 TIMM44, 1 TIMM16/PAM16 and 1 TIMM14. Associates with the TIM23 complex.

The protein resides in the mitochondrion inner membrane. In terms of biological role, regulates ATP-dependent protein translocation into the mitochondrial matrix. This chain is Mitochondrial import inner membrane translocase subunit tim16-A (pam16-a), found in Xenopus laevis (African clawed frog).